A 776-amino-acid chain; its full sequence is Lon protease (776 aa).

The Lon N-terminal domain occupies 12–209; that stretch reads LPIIALRGLW…LVYKFVIKEI (198 aa). 360-367 is an ATP binding site; it reads GPPGVGKT. The Lon proteolytic domain maps to 596-776; the sequence is EDTVGVVNGL…VKEILDEVLI (181 aa). Catalysis depends on residues serine 683 and lysine 726.

This sequence belongs to the peptidase S16 family. Homohexamer. Organized in a ring with a central cavity.

The protein localises to the cytoplasm. It catalyses the reaction Hydrolysis of proteins in presence of ATP.. ATP-dependent serine protease that mediates the selective degradation of mutant and abnormal proteins as well as certain short-lived regulatory proteins. Required for cellular homeostasis and for survival from DNA damage and developmental changes induced by stress. Degrades polypeptides processively to yield small peptide fragments that are 5 to 10 amino acids long. Binds to DNA in a double-stranded, site-specific manner. The protein is Lon protease of Finegoldia magna (strain ATCC 29328 / DSM 20472 / WAL 2508) (Peptostreptococcus magnus).